Here is a 90-residue protein sequence, read N- to C-terminus: Large ribosomal subunit protein bL27 (90 aa).

Residues 1–22 (MAHKKAGGSTRNGRDSNPKMLG) form a disordered region.

It belongs to the bacterial ribosomal protein bL27 family.

The polypeptide is Large ribosomal subunit protein bL27 (Coxiella burnetii (strain Dugway 5J108-111)).